The sequence spans 575 residues: Alpha-(1,6)-fucosyltransferase (575 aa).

The Cytoplasmic portion of the chain corresponds to 1–9; it reads MRPWTGSWR. A helical; Signal-anchor for type II membrane protein transmembrane segment spans residues 10-30; that stretch reads WIMLILFAWGTLLFYIGGHLV. Residues 31–575 are Lumenal-facing; that stretch reads RDNDHPDHSS…KYPTYPEAEK (545 aa). Disulfide bonds link cysteine 204/cysteine 266, cysteine 212/cysteine 230, and cysteine 218/cysteine 222. The 288-residue stretch at 206–493 folds into the GT23 domain; that stretch reads KAKKLVCNIN…PDASANFHSL (288 aa). Serine 278 carries the phosphoserine modification. Residues 299–305 carry the SH3-binding motif; that stretch reads PRPPYLP. An important for donor substrate binding region spans residues 365–366; it reads RR. Cysteine 465 and cysteine 472 are oxidised to a cystine. An SH3 domain is found at 502 to 563; it reads QNAHNQIAIY…PSYKVREKIE (62 aa).

The protein belongs to the glycosyltransferase 23 family. Post-translationally, tyrosine phosphorylated by PKDCC/VLK.

It localises to the golgi apparatus. It is found in the golgi stack membrane. The catalysed reaction is N(4)-{beta-D-GlcNAc-(1-&gt;2)-alpha-D-Man-(1-&gt;3)-[beta-D-GlcNAc-(1-&gt;2)-alpha-D-Man-(1-&gt;6)]-beta-D-Man-(1-&gt;4)-beta-D-GlcNAc-(1-&gt;4)-beta-D-GlcNAc}-L-asparaginyl-[protein] + GDP-beta-L-fucose = an N(4)-{beta-D-GlcNAc-(1-&gt;2)-alpha-D-Man-(1-&gt;3)-[beta-D-GlcNAc-(1-&gt;2)-alpha-D-Man-(1-&gt;6)]-beta-D-Man-(1-&gt;4)-beta-D-GlcNAc-(1-&gt;4)-[alpha-L-Fuc-(1-&gt;6)]-beta-D-GlcNAc}-L-asparaginyl-[protein] + GDP + H(+). It participates in protein modification; protein glycosylation. Catalyzes the addition of fucose in alpha 1-6 linkage to the first GlcNAc residue, next to the peptide chains in N-glycans. The sequence is that of Alpha-(1,6)-fucosyltransferase (FUT8) from Canis lupus familiaris (Dog).